The sequence spans 554 residues: Germacrene A synthase (554 aa).

Residues aspartate 306, aspartate 310, threonine 453, and glutamate 457 each coordinate Mg(2+). Positions 306-310 match the DDXXD motif motif; that stretch reads DDTYD.

The protein belongs to the terpene synthase family. Mg(2+) serves as cofactor.

The protein localises to the cytoplasm. It localises to the cytosol. The enzyme catalyses (2E,6E)-farnesyl diphosphate = (+)-(R)-germacrene A + diphosphate. It participates in secondary metabolite biosynthesis; terpenoid biosynthesis. Functionally, sesquiterpene synthase involved in germacrene A biosynthesis. Also produces additional sesquiterpene products, including 4,5-di-epi-aristolochene, eremophilene, alpha-selinene. The polypeptide is Germacrene A synthase (Pogostemon cablin (Patchouli)).